A 141-amino-acid polypeptide reads, in one-letter code: HTH-type transcriptional repressor NsrR (141 aa).

Residues 2 to 129 enclose the HTH rrf2-type domain; that stretch reads QLTNFTDFGL…DQHTIQDMLT (128 aa). The H-T-H motif DNA-binding region spans 28 to 51; it reads ITVVTETFDVSRNHMVKIINKLGQ. Residues C91, C96, and C102 each coordinate [2Fe-2S] cluster.

[2Fe-2S] cluster serves as cofactor.

Functionally, nitric oxide-sensitive repressor of genes involved in protecting the cell against nitrosative stress. May require iron for activity. The protein is HTH-type transcriptional repressor NsrR of Aliivibrio salmonicida (strain LFI1238) (Vibrio salmonicida (strain LFI1238)).